Consider the following 338-residue polypeptide: Large ribosomal subunit protein uL10 (338 aa).

Basic and acidic residues predominate over residues 309 to 327; sequence KAEVEEAKEEEKEEKKEEA. Positions 309 to 338 are disordered; the sequence is KAEVEEAKEEEKEEKKEEAAPAAAGLGLLF.

Belongs to the universal ribosomal protein uL10 family. As to quaternary structure, part of the 50S ribosomal subunit. Forms part of the ribosomal stalk which helps the ribosome interact with GTP-bound translation factors. Forms a heptameric L10(L12)2(L12)2(L12)2 complex, where L10 forms an elongated spine to which the L12 dimers bind in a sequential fashion.

Its function is as follows. Forms part of the ribosomal stalk, playing a central role in the interaction of the ribosome with GTP-bound translation factors. The protein is Large ribosomal subunit protein uL10 of Methanothermococcus thermolithotrophicus (Methanococcus thermolithotrophicus).